The following is a 136-amino-acid chain: Small ribosomal subunit protein uS8c (136 aa).

Belongs to the universal ribosomal protein uS8 family. In terms of assembly, part of the 30S ribosomal subunit.

It is found in the plastid. Its subcellular location is the chloroplast. Functionally, one of the primary rRNA binding proteins, it binds directly to 16S rRNA central domain where it helps coordinate assembly of the platform of the 30S subunit. The polypeptide is Small ribosomal subunit protein uS8c (rps8) (Citrus sinensis (Sweet orange)).